The chain runs to 342 residues: Biotin synthase (342 aa).

Residues 38-262 (GQVQISTLLS…MMPTSYVRLS (225 aa)) enclose the Radical SAM core domain. Residues C53, C57, and C60 each contribute to the [4Fe-4S] cluster site. The [2Fe-2S] cluster site is built by C97, C128, C188, and R260.

It belongs to the radical SAM superfamily. Biotin synthase family. In terms of assembly, homodimer. It depends on [4Fe-4S] cluster as a cofactor. [2Fe-2S] cluster is required as a cofactor.

The enzyme catalyses (4R,5S)-dethiobiotin + (sulfur carrier)-SH + 2 reduced [2Fe-2S]-[ferredoxin] + 2 S-adenosyl-L-methionine = (sulfur carrier)-H + biotin + 2 5'-deoxyadenosine + 2 L-methionine + 2 oxidized [2Fe-2S]-[ferredoxin]. It participates in cofactor biosynthesis; biotin biosynthesis; biotin from 7,8-diaminononanoate: step 2/2. Functionally, catalyzes the conversion of dethiobiotin (DTB) to biotin by the insertion of a sulfur atom into dethiobiotin via a radical-based mechanism. This Baumannia cicadellinicola subsp. Homalodisca coagulata protein is Biotin synthase.